A 337-amino-acid polypeptide reads, in one-letter code: Probable phospholipase A1 magnifin (337 aa).

An N-terminal signal peptide occupies residues 1 to 21; the sequence is MNLKYLLLFFCLVQVLHYCYS. Residues 22–33 constitute a propeptide that is removed on maturation; sequence HGDPSLSNELDR. Cysteines 39 and 123 form a disulfide. Residue S173 is the Nucleophile of the active site. D201 serves as the catalytic Charge relay system. 2 disulfides stabilise this stretch: C212-C217 and C255-C264. H266 functions as the Charge relay system in the catalytic mechanism. 3 disulfides stabilise this stretch: C281-C305, C282-C330, and C298-C303.

Belongs to the AB hydrolase superfamily. Lipase family. In terms of tissue distribution, expressed by the venom gland.

It localises to the secreted. It catalyses the reaction a 1,2-diacyl-sn-glycero-3-phosphocholine + H2O = a 2-acyl-sn-glycero-3-phosphocholine + a fatty acid + H(+). Functionally, catalyzes the hydrolysis of phosphatidylcholine with phospholipase A1 activity. May act as an allergen and induce hemolytic activity. In vivo, induces dose-dependent platelet aggregation (nanomolar concentration) and induces thrombosis. The protein is Probable phospholipase A1 magnifin of Vespa magnifica (Hornet).